Consider the following 208-residue polypeptide: Dephospho-CoA kinase (208 aa).

Residues 8-208 (LVGVTGGIGS…VYQSLLTVVE (201 aa)) form the DPCK domain. Position 16–21 (16–21 (GSGKST)) interacts with ATP.

Belongs to the CoaE family.

It localises to the cytoplasm. The enzyme catalyses 3'-dephospho-CoA + ATP = ADP + CoA + H(+). It functions in the pathway cofactor biosynthesis; coenzyme A biosynthesis; CoA from (R)-pantothenate: step 5/5. Its function is as follows. Catalyzes the phosphorylation of the 3'-hydroxyl group of dephosphocoenzyme A to form coenzyme A. The sequence is that of Dephospho-CoA kinase from Chlorobaculum tepidum (strain ATCC 49652 / DSM 12025 / NBRC 103806 / TLS) (Chlorobium tepidum).